Reading from the N-terminus, the 276-residue chain is N-alpha-acetyltransferase 60 (276 aa).

The 206-residue stretch at 34-239 (VQLRFLVPDD…WTLLDHIKHY (206 aa)) folds into the N-acetyltransferase domain. Tyrosine 59 contacts substrate. Tyrosine 139 is a catalytic residue. Leucine 141 is a substrate binding site. Residues 143–145 (LGV) and 151–156 (RNGIGS) contribute to the acetyl-CoA site. Histidine 180 is an active-site residue. Acetyl-CoA contacts are provided by residues asparagine 185 and 192–195 (YEKR). The segment at 204–215 (PYYYNIRGKGKD) is required for homodimerization. Tyrosine 207 contacts substrate.

This sequence belongs to the acetyltransferase family. NAA60 subfamily.

It catalyses the reaction N-terminal L-methionyl-[transmembrane protein] + acetyl-CoA = N-terminal N(alpha)-acetyl-L-methionyl-[transmembrane protein] + CoA + H(+). The catalysed reaction is L-lysyl-[protein] + acetyl-CoA = N(6)-acetyl-L-lysyl-[protein] + CoA + H(+). Functionally, displays alpha (N-terminal) acetyltransferase activity towards a range of N-terminal sequences including those starting with Met-Lys, Met-Val, Met-Ala and Met-Met. Required for normal chromosomal segregation during anaphase. Shows histone acetyltransferase activity toward free histones. Its function is as follows. Does not show histone acetyltransferase activity toward free histones. The chain is N-alpha-acetyltransferase 60 from Drosophila melanogaster (Fruit fly).